Here is a 215-residue protein sequence, read N- to C-terminus: MANRGATRPNGPNTGNKICQFKLVLLGESAVGKSSLVLRFVKGQFHEFQESTIGAAFLTQTVCLDDTTVKFEIWDTAGQERYHSLAPMYYRGAQAAIVVYDITNEESFSRAKNWVKELQRQASPNIVIALSGNKADLANKRAVDFQEAQSYADDNSLLFMETSAKTPMNVNEIFMAIAKKLPKNEPQNPGANSARGRGVDLTEPAQPARSQCCSN.

Positions 29, 30, 32, 33, 34, 35, 46, 47, 52, and 78 each coordinate GTP. A Mg(2+)-binding site is contributed by Ser34. 2 short sequence motifs (switch) span residues 44–56 (QFHEFQESTIGAA) and 77–93 (AGQERYHSLAPMYYRGA). A Mg(2+)-binding site is contributed by Thr52. The residue at position 84 (Ser84) is a Phosphoserine. GTP-binding residues include Asn133, Lys134, Asp136, Ala164, and Lys165. The segment at 181-215 (LPKNEPQNPGANSARGRGVDLTEPAQPARSQCCSN) is disordered. S-geranylgeranyl cysteine attachment occurs at residues Cys212 and Cys213.

This sequence belongs to the small GTPase superfamily. Rab family. Interacts with GDI1; this promotes dissociation from membranes; phosphorylation at Ser-84 disrupts this interaction. Interacts with GDI2; phosphorylation at Ser-84 disrupts the interaction. Interacts with EEA1. Interacts with RIN1 and GAPVD1, which regulate its pathway, probably by acting as a GEF. Interacts with ALS2CL, SUN2, ZFYVE20 and RUFY1. Interacts with RABEP1; one RABEP1 homodimer binds two RAB5A chains, but at opposite sides of the dimer. Interacts with SGSM1, SGSM3 and PIK3CB. Interacts with RINL. May be a component of a complex composed of RAB5A, DYN2 and PIK3C3. Does not interact with the BLOC-3 complex (heterodimer of HPS1 and HPS4). Interacts with CLN5. Interacts with APPL2. Interacts with F8A1/F8A2/F8A3. Found in a complex with F8A1/F8A2/F8A3, HTT and RAB5A; mediates the recruitment of HTT by RAB5A onto early endosomes. Interacts with ATP9A. Interacts with PPP1R21; mediates the recruitment of FERRY complex by RAB5A onto early endosomes. Mg(2+) is required as a cofactor. In terms of processing, phosphorylation of Ser-84 in the switch II region by LRRK2 prevents the association of RAB regulatory proteins, including RAB GDP dissociation inhibitors GDI1 and GDI2.

It is found in the cell membrane. The protein resides in the early endosome membrane. The protein localises to the melanosome. It localises to the cytoplasmic vesicle. Its subcellular location is the cell projection. It is found in the ruffle. The protein resides in the membrane. The protein localises to the cytoplasm. It localises to the cytosol. Its subcellular location is the phagosome membrane. It is found in the endosome membrane. The enzyme catalyses GTP + H2O = GDP + phosphate + H(+). Regulated by guanine nucleotide exchange factors (GEFs) including RINL, which promote the exchange of bound GDP for free GTP. Regulated by GTPase activating proteins (GAPs) which increase the GTP hydrolysis activity. Inhibited by GDP dissociation inhibitors (GDIs). Its function is as follows. The small GTPases Rab are key regulators of intracellular membrane trafficking, from the formation of transport vesicles to their fusion with membranes. Rabs cycle between an inactive GDP-bound form and an active GTP-bound form that is able to recruit to membranes different sets of downstream effectors directly responsible for vesicle formation, movement, tethering and fusion. RAB5A is required for the fusion of plasma membranes and early endosomes. Contributes to the regulation of filopodia extension. Required for the exosomal release of SDCBP, CD63, PDCD6IP and syndecan. Regulates maturation of apoptotic cell-containing phagosomes, probably downstream of DYN2 and PIK3C3. This chain is Ras-related protein Rab-5A, found in Rattus norvegicus (Rat).